The chain runs to 585 residues: Testis-specific serine kinase substrate (585 aa).

A compositionally biased stretch (low complexity) spans 91–108 (EPDSSGTDSTTEDSGPLA). The disordered stretch occupies residues 91 to 126 (EPDSSGTDSTTEDSGPLALPGPPASPTTPWAPEDPD). A phosphoserine mark is found at S224, S281, and S309. Disordered stretches follow at residues 262-309 (SRHG…PSLS) and 559-585 (LEGS…GSEQ).

Phosphorylated on serine residue(s) by STK22A/TSSK1 and STK22B/TSSK2.

Its subcellular location is the cytoplasm. It localises to the cytoskeleton. The protein localises to the microtubule organizing center. It is found in the centrosome. The protein resides in the centriole. In terms of biological role, may play a role in testicular physiology, most probably in the process of spermatogenesis or spermatid development. In Rattus norvegicus (Rat), this protein is Testis-specific serine kinase substrate (Tsks).